A 256-amino-acid chain; its full sequence is Cilia- and flagella-associated protein 410 (256 aa).

LRR repeat units lie at residues 19–40, 41–62, and 63–84; these read SVRKLNCWGSRLTDISICQEMP, SLEVITLSVNSISTLEPVSRCQ, and RLSELYLRRNRIPSLAELFYLK. One can recognise an LRRCT domain in the interval 97 to 137; sequence NPCCGTSPHRYRMTVLRTLPRLQKLDNQAVTEEELSRALSE. 2 disordered regions span residues 129–156 and 168–212; these read EELSRALSEGEEITAAPEREGTGHGGPK and AETG…SSHR. Phosphoserine is present on residues S136 and S177.

As to quaternary structure, found in a complex with CFAP410, NEK1 and SPATA7. Interacts with NEK1. Widely expressed. Expressed in the retina.

The protein localises to the mitochondrion. It localises to the cytoplasm. Its subcellular location is the cytoskeleton. The protein resides in the cilium basal body. It is found in the cell projection. The protein localises to the cilium. It localises to the photoreceptor outer segment. In terms of biological role, plays a role in cilia formation and/or maintenance. Plays a role in the regulation of cell morphology and cytoskeletal organization. Involved in DNA damage repair. The chain is Cilia- and flagella-associated protein 410 from Homo sapiens (Human).